Reading from the N-terminus, the 361-residue chain is Chorismate synthase (361 aa).

Positions 48 and 54 each coordinate NADP(+). Residues 125 to 127 (RSS), 238 to 239 (NA), Gly278, 293 to 297 (KPTSS), and Arg319 each bind FMN.

Belongs to the chorismate synthase family. Homotetramer. The cofactor is FMNH2.

The catalysed reaction is 5-O-(1-carboxyvinyl)-3-phosphoshikimate = chorismate + phosphate. It participates in metabolic intermediate biosynthesis; chorismate biosynthesis; chorismate from D-erythrose 4-phosphate and phosphoenolpyruvate: step 7/7. Its function is as follows. Catalyzes the anti-1,4-elimination of the C-3 phosphate and the C-6 proR hydrogen from 5-enolpyruvylshikimate-3-phosphate (EPSP) to yield chorismate, which is the branch point compound that serves as the starting substrate for the three terminal pathways of aromatic amino acid biosynthesis. This reaction introduces a second double bond into the aromatic ring system. The protein is Chorismate synthase of Vibrio parahaemolyticus serotype O3:K6 (strain RIMD 2210633).